The following is a 314-amino-acid chain: R2-like ligand binding oxidase (314 aa).

Positions 68, 101, and 104 each coordinate Mn(2+). A cross-link (3-(O4'-tyrosyl)-valine (Val-Tyr)) is located at residues 71 to 162; the sequence is VTEDIQPFMS…AAQVRASVTY (92 aa). E101 provides a ligand contact to Fe cation. 3 residues coordinate Fe cation: E167, E202, and H205.

It belongs to the ribonucleoside diphosphate reductase small chain family. R2-like ligand binding oxidase subfamily. In terms of assembly, homodimer. It depends on Fe cation as a cofactor. The cofactor is Mn(2+).

Probable oxidase that might be involved in lipid metabolism. In Mycobacterium bovis (strain ATCC BAA-935 / AF2122/97), this protein is R2-like ligand binding oxidase.